The primary structure comprises 135 residues: NADH-quinone oxidoreductase subunit K (135 aa).

A run of 3 helical transmembrane segments spans residues 33-53 (VLGLIPMSHGLILAGILFAIG), 63-83 (FLFMLMSLEIMMNAAALAFVV), and 95-115 (IMFIFILTLAAAEAAIGLAIL).

It belongs to the complex I subunit 4L family. NDH-1 is composed of 14 different subunits. Subunits NuoA, H, J, K, L, M, N constitute the membrane sector of the complex.

Its subcellular location is the cell inner membrane. It carries out the reaction a quinone + NADH + 5 H(+)(in) = a quinol + NAD(+) + 4 H(+)(out). NDH-1 shuttles electrons from NADH, via FMN and iron-sulfur (Fe-S) centers, to quinones in the respiratory chain. The immediate electron acceptor for the enzyme in this species is believed to be ubiquinone. Couples the redox reaction to proton translocation (for every two electrons transferred, four hydrogen ions are translocated across the cytoplasmic membrane), and thus conserves the redox energy in a proton gradient. This chain is NADH-quinone oxidoreductase subunit K, found in Psychrobacter cryohalolentis (strain ATCC BAA-1226 / DSM 17306 / VKM B-2378 / K5).